Here is a 301-residue protein sequence, read N- to C-terminus: Sulfate adenylyltransferase subunit 2 1 (301 aa).

This sequence belongs to the PAPS reductase family. CysD subfamily. Heterodimer composed of CysD, the smaller subunit, and CysN.

The enzyme catalyses sulfate + ATP + H(+) = adenosine 5'-phosphosulfate + diphosphate. The protein operates within sulfur metabolism; hydrogen sulfide biosynthesis; sulfite from sulfate: step 1/3. Its function is as follows. With CysN forms the ATP sulfurylase (ATPS) that catalyzes the adenylation of sulfate producing adenosine 5'-phosphosulfate (APS) and diphosphate, the first enzymatic step in sulfur assimilation pathway. APS synthesis involves the formation of a high-energy phosphoric-sulfuric acid anhydride bond driven by GTP hydrolysis by CysN coupled to ATP hydrolysis by CysD. This Shewanella sediminis (strain HAW-EB3) protein is Sulfate adenylyltransferase subunit 2 1.